A 248-amino-acid polypeptide reads, in one-letter code: Triosephosphate isomerase (248 aa).

A substrate-binding site is contributed by 9–11 (NWK). Catalysis depends on H94, which acts as the Electrophile. E166 acts as the Proton acceptor in catalysis. Substrate contacts are provided by residues G172, S211, and 232-233 (GG).

Belongs to the triosephosphate isomerase family. In terms of assembly, homodimer.

The protein resides in the cytoplasm. The enzyme catalyses D-glyceraldehyde 3-phosphate = dihydroxyacetone phosphate. Its pathway is carbohydrate biosynthesis; gluconeogenesis. The protein operates within carbohydrate degradation; glycolysis; D-glyceraldehyde 3-phosphate from glycerone phosphate: step 1/1. In terms of biological role, involved in the gluconeogenesis. Catalyzes stereospecifically the conversion of dihydroxyacetone phosphate (DHAP) to D-glyceraldehyde-3-phosphate (G3P). In Ruthia magnifica subsp. Calyptogena magnifica, this protein is Triosephosphate isomerase.